We begin with the raw amino-acid sequence, 592 residues long: Protein phosphatase EYA1 (592 aa).

Disordered stretches follow at residues 1-95 (MEMQ…RPYP) and 240-320 (MTSS…PDSD). Low complexity predominate over residues 8-26 (SPHSRLSGSSESPSGPKLG). Residues 28–63 (SHINSNSMTPNGTEVKTEPMSSSETASTTADGSLNN) are compositionally biased toward polar residues. Low complexity-rich tracts occupy residues 64–75 (FSGSAIGSSSFS) and 241–253 (TSSN…PSTN). Polar residues predominate over residues 254 to 287 (ATYQLQEPPSGITSQAVTDPTAEYSTIHSPSTPI). The span at 288–303 (KDSDSDRLRRGSDGKS) shows a compositional bias: basic and acidic residues. D328 serves as the catalytic Nucleophile. Mg(2+) contacts are provided by D328, D330, and D556. D330 (proton donor) is an active-site residue.

Belongs to the HAD-like hydrolase superfamily. EYA family. Probably interacts with SIX2, SIX4 and SIX5. Interacts with H2AX in response to DNA damage. Interacts with SIX3; promotes EYA1 translocation to the nucleus. Mg(2+) is required as a cofactor. Sumoylated with SUMO1. In terms of tissue distribution, in the embryo, highly expressed in kidney with lower levels in brain. Weakly expressed in lung. In the adult, highly expressed in heart and skeletal muscle. Weakly expressed in brain and liver. No expression in eye or kidney.

It is found in the cytoplasm. The protein resides in the nucleus. It carries out the reaction O-phospho-L-tyrosyl-[protein] + H2O = L-tyrosyl-[protein] + phosphate. It catalyses the reaction O-phospho-L-seryl-[protein] + H2O = L-seryl-[protein] + phosphate. The catalysed reaction is O-phospho-L-threonyl-[protein] + H2O = L-threonyl-[protein] + phosphate. Its function is as follows. Functions both as protein phosphatase and as transcriptional coactivator for SIX1, and probably also for SIX2, SIX4 and SIX5. Tyrosine phosphatase that dephosphorylates 'Tyr-142' of histone H2AX (H2AXY142ph) and promotes efficient DNA repair via the recruitment of DNA repair complexes containing MDC1. 'Tyr-142' phosphorylation of histone H2AX plays a central role in DNA repair and acts as a mark that distinguishes between apoptotic and repair responses to genotoxic stress. Its function as histone phosphatase may contribute to its function in transcription regulation during organogenesis. Also has phosphatase activity with proteins phosphorylated on Ser and Thr residues (in vitro). Required for normal embryonic development of the craniofacial and trunk skeleton, kidneys and ears. Together with SIX1, it plays an important role in hypaxial muscle development; in this it is functionally redundant with EYA2. The protein is Protein phosphatase EYA1 (EYA1) of Homo sapiens (Human).